A 292-amino-acid polypeptide reads, in one-letter code: NAD kinase (292 aa).

Asp-73 serves as the catalytic Proton acceptor. Residues 73–74 (DG), 147–148 (NE), His-158, Arg-175, Asp-177, 188–193 (TAYSLS), and Gln-247 contribute to the NAD(+) site.

It belongs to the NAD kinase family. It depends on a divalent metal cation as a cofactor.

It localises to the cytoplasm. The catalysed reaction is NAD(+) + ATP = ADP + NADP(+) + H(+). In terms of biological role, involved in the regulation of the intracellular balance of NAD and NADP, and is a key enzyme in the biosynthesis of NADP. Catalyzes specifically the phosphorylation on 2'-hydroxyl of the adenosine moiety of NAD to yield NADP. In Shigella dysenteriae serotype 1 (strain Sd197), this protein is NAD kinase.